A 784-amino-acid chain; its full sequence is Cell wall protein Lmo0130 (784 aa).

An N-terminal signal peptide occupies residues 1-34 (MKVNKFFKKTTHVLLVAGLTIGLTAPFTGTTAQA). The segment at 690 to 761 (ATTPPDNGNG…NTSLPTTGDT (72 aa)) is disordered. Positions 697-729 (GNGGTDNGNGNGNNGGTDGNGGTNNGNGSGTNG) are enriched in gly residues. The span at 730–759 (GTTTTEDPTTTTSNTSTTGTSSNTSLPTTG) shows a compositional bias: low complexity. An LPXTG sorting signal motif is present at residues 755 to 759 (LPTTG). Thr-758 is modified (pentaglycyl murein peptidoglycan amidated threonine). The propeptide at 759-784 (GDTAGLATVFGVILTTTALYVLRKRS) is removed by sortase A.

Its subcellular location is the secreted. It localises to the cell wall. The chain is Cell wall protein Lmo0130 from Listeria monocytogenes serovar 1/2a (strain ATCC BAA-679 / EGD-e).